The sequence spans 175 residues: Methylated-DNA--protein-cysteine methyltransferase (175 aa).

Catalysis depends on Cys-142, which acts as the Nucleophile; methyl group acceptor.

It belongs to the MGMT family.

It localises to the cytoplasm. It carries out the reaction a 6-O-methyl-2'-deoxyguanosine in DNA + L-cysteinyl-[protein] = S-methyl-L-cysteinyl-[protein] + a 2'-deoxyguanosine in DNA. The enzyme catalyses a 4-O-methyl-thymidine in DNA + L-cysteinyl-[protein] = a thymidine in DNA + S-methyl-L-cysteinyl-[protein]. In terms of biological role, involved in the cellular defense against the biological effects of O6-methylguanine (O6-MeG) and O4-methylthymine (O4-MeT) in DNA. Repairs the methylated nucleobase in DNA by stoichiometrically transferring the methyl group to a cysteine residue in the enzyme. This is a suicide reaction: the enzyme is irreversibly inactivated. The sequence is that of Methylated-DNA--protein-cysteine methyltransferase from Thermococcus sibiricus (strain DSM 12597 / MM 739).